Reading from the N-terminus, the 2353-residue chain is C2 domain-containing protein 3 (2353 aa).

The interval Met-1 to Thr-27 is disordered. Ser-466 carries the post-translational modification Phosphoserine. Disordered stretches follow at residues Lys-488 to Asn-508 and Gly-549 to Pro-568. Over residues Lys-496 to Arg-507 the composition is skewed to basic residues. A C2 1 domain is found at Asp-521 to Asp-678. The residue at position 728 (Ser-728) is a Phosphoserine. C2 domains follow at residues Ser-787–Leu-919, Gln-985–Asp-1147, Ser-1171–Tyr-1339, and Glu-1403–Val-1533. Residues His-1569–Glu-1591 form a disordered region. The region spanning Thr-1617–Tyr-1745 is the C2 6 domain. The tract at residues Ser-1822–His-1846 is disordered. Residues Pro-1830–Gln-1839 show a composition bias toward polar residues. Position 1891 is a phosphoserine (Ser-1891). Disordered regions lie at residues Ala-1972–Arg-2032, Thr-2084–Phe-2118, Leu-2130–Leu-2269, and Pro-2301–Pro-2334. Basic and acidic residues predominate over residues Pro-2007–Thr-2016. The span at Thr-2084–Ile-2098 shows a compositional bias: polar residues. A phosphoserine mark is found at Ser-2114 and Ser-2132. Residues Ser-2181–Asp-2198 are compositionally biased toward polar residues. A compositionally biased stretch (basic and acidic residues) spans Ser-2236–Gln-2253. The span at Arg-2254–Ser-2267 shows a compositional bias: polar residues.

As to quaternary structure, interacts with IFT88, BBS4 and PCM1. Interacts with OFD1; OFD1 may act as a negative regulator of C2CD3. Associates with the BBSome complex.

The protein resides in the cytoplasm. The protein localises to the cytoskeleton. It localises to the cilium basal body. It is found in the microtubule organizing center. Its subcellular location is the centrosome. The protein resides in the centriole. Component of the centrioles that acts as a positive regulator of centriole elongation. Promotes assembly of centriolar distal appendage, a structure at the distal end of the mother centriole that acts as an anchor of the cilium, and is required for recruitment of centriolar distal appendages proteins CEP83, SCLT1, CEP89, FBF1 and CEP164. Not required for centriolar satellite integrity or RAB8 activation. Required for primary cilium formation. Required for sonic hedgehog/SHH signaling and for proteolytic processing of GLI3. This chain is C2 domain-containing protein 3 (C2CD3), found in Homo sapiens (Human).